The chain runs to 295 residues: Iodotyrosine deiodinase (295 aa).

Residues 3–23 (VFSSLTPVFVAVLCVIIGFLF) form a helical membrane-spanning segment. The disordered stretch occupies residues 29–81 (KESRSKQKPSDQTARPWVDEDLQDDTEISTKDNEENNEDWMDTTDEENLPHVP). The segment covering 63–75 (ENNEDWMDTTDEE) has biased composition (acidic residues). FMN-binding positions include 106-110 (RRSVR), serine 134, and 134-135 (SG). The 3-iodo-L-tyrosine site is built by alanine 136, glutamate 163, tyrosine 167, and lysine 188. Residues 243 to 245 (TTT) and arginine 285 contribute to the FMN site.

It belongs to the nitroreductase family. FMN is required as a cofactor.

The protein localises to the membrane. It catalyses the reaction 2 iodide + L-tyrosine + 2 NADP(+) = 3,5-diiodo-L-tyrosine + 2 NADPH + H(+). The enzyme catalyses iodide + L-tyrosine + NADP(+) = 3-iodo-L-tyrosine + NADPH. It carries out the reaction 3-iodo-L-tyrosine + iodide + NADP(+) = 3,5-diiodo-L-tyrosine + NADPH + H(+). The catalysed reaction is L-tyrosine + chloride + NADP(+) = 3-chloro-L-tyrosine + NADPH. It catalyses the reaction bromide + L-tyrosine + NADP(+) = 3-bromo-L-tyrosine + NADPH. Catalyzes the dehalogenation of halotyrosines such as 3,5-diiodo-L-tyrosine. Likely to also catalyze the dehalogenation of other halotyrosines such as 3-bromo-L-tyrosine, 3-chloro-L-tyrosine and 3-iodo-L-tyrosine. The polypeptide is Iodotyrosine deiodinase (iyd) (Danio rerio (Zebrafish)).